Here is a 235-residue protein sequence, read N- to C-terminus: tRNA pseudouridine synthase B (235 aa).

Asp48 serves as the catalytic Nucleophile.

Belongs to the pseudouridine synthase TruB family. Type 1 subfamily.

It carries out the reaction uridine(55) in tRNA = pseudouridine(55) in tRNA. Functionally, responsible for synthesis of pseudouridine from uracil-55 in the psi GC loop of transfer RNAs. The chain is tRNA pseudouridine synthase B from Phocaeicola vulgatus (strain ATCC 8482 / DSM 1447 / JCM 5826 / CCUG 4940 / NBRC 14291 / NCTC 11154) (Bacteroides vulgatus).